Here is a 733-residue protein sequence, read N- to C-terminus: 1,4-alpha-glucan branching enzyme GlgB (733 aa).

Catalysis depends on Asp412, which acts as the Nucleophile. The Proton donor role is filled by Glu467.

It belongs to the glycosyl hydrolase 13 family. GlgB subfamily. Monomer.

It catalyses the reaction Transfers a segment of a (1-&gt;4)-alpha-D-glucan chain to a primary hydroxy group in a similar glucan chain.. Its pathway is glycan biosynthesis; glycogen biosynthesis. Functionally, catalyzes the formation of the alpha-1,6-glucosidic linkages in glycogen by scission of a 1,4-alpha-linked oligosaccharide from growing alpha-1,4-glucan chains and the subsequent attachment of the oligosaccharide to the alpha-1,6 position. This chain is 1,4-alpha-glucan branching enzyme GlgB, found in Burkholderia vietnamiensis (strain G4 / LMG 22486) (Burkholderia cepacia (strain R1808)).